The chain runs to 178 residues: Large ribosomal subunit protein bL35m (178 aa).

This sequence belongs to the bacterial ribosomal protein bL35 family.

It is found in the mitochondrion. This is Large ribosomal subunit protein bL35m (mRpL35) from Drosophila melanogaster (Fruit fly).